The chain runs to 76 residues: Potassium/proton antiporter CemA (76 aa).

A helical transmembrane segment spans residues 35–52 (QILSCLVSIFPVILDTIF).

The protein belongs to the CemA family.

It localises to the plastid. Its subcellular location is the chloroplast inner membrane. It catalyses the reaction K(+)(in) + H(+)(out) = K(+)(out) + H(+)(in). In terms of biological role, contributes to K(+)/H(+) antiport activity by supporting proton efflux to control proton extrusion and homeostasis in chloroplasts in a light-dependent manner to modulate photosynthesis. Prevents excessive induction of non-photochemical quenching (NPQ) under continuous-light conditions. Indirectly promotes efficient inorganic carbon uptake into chloroplasts. This is Potassium/proton antiporter CemA from Vicia faba (Broad bean).